Reading from the N-terminus, the 393-residue chain is Biotin synthase, mitochondrial (393 aa).

The transit peptide at 1 to 20 directs the protein to the mitochondrion; it reads MSVSFTRSFPRAFIRSYGTV. Residues 81–310 enclose the Radical SAM core domain; it reads SAIQMCTLMN…ATIVRLAAGR (230 aa). [4Fe-4S] cluster is bound by residues cysteine 96, cysteine 100, and cysteine 103. Residues cysteine 140, cysteine 173, cysteine 233, and arginine 305 each contribute to the [2Fe-2S] cluster site. A disordered region spans residues 366–393; sequence NAATPQQHVDSVAHESEKNPAAPAAEAL.

This sequence belongs to the radical SAM superfamily. Biotin synthase family. Requires [4Fe-4S] cluster as cofactor. [2Fe-2S] cluster is required as a cofactor.

Its subcellular location is the mitochondrion. The catalysed reaction is (4R,5S)-dethiobiotin + (sulfur carrier)-SH + 2 reduced [2Fe-2S]-[ferredoxin] + 2 S-adenosyl-L-methionine = (sulfur carrier)-H + biotin + 2 5'-deoxyadenosine + 2 L-methionine + 2 oxidized [2Fe-2S]-[ferredoxin]. It functions in the pathway cofactor biosynthesis; biotin biosynthesis; biotin from 7,8-diaminononanoate: step 2/2. Functionally, biotin synthase; part of the cluster involved in the biosynthesis of biotin (also known as vitamin B8 or vitamin H), a water-soluble vitamin that functions as a prosthetic group of many carboxylases, such as acetyl-CoA carboxylase and pyruvate carboxylase. Catalyzes the conversion of dethiobiotin (DTB) to biotin by the insertion of a sulfur atom into dethiobiotin via a radical-based mechanism. The polypeptide is Biotin synthase, mitochondrial (Emericella nidulans (strain FGSC A4 / ATCC 38163 / CBS 112.46 / NRRL 194 / M139) (Aspergillus nidulans)).